The following is a 478-amino-acid chain: RNA-binding protein 42 (478 aa).

Residues 1–20 (MASAMAGAGPAPGLPVAGGP) show a composition bias toward low complexity. The disordered stretch occupies residues 1-33 (MASAMAGAGPAPGLPVAGGPVVPGPGVGIPGKS). At Ala-2 the chain carries N-acetylalanine. Residue Ser-133 is modified to Phosphoserine. Residues Arg-151, Arg-156, Arg-166, and Arg-179 each carry the asymmetric dimethylarginine modification. 2 disordered regions span residues 171–209 (LSSA…PPMA) and 317–354 (SLRP…PEKL). Residues 193 to 205 (PPLPGPPGPPMML) show a composition bias toward pro residues. Residues 234 to 478 (DLGLGLGLGL…QKEKKKLGLR (245 aa)) are necessary for interaction with HNRNPK. Basic and acidic residues predominate over residues 343–354 (GEDKKKGKPEKL). The RRM domain occupies 379–457 (FRIFCGDLGN…RPIKLRKSMW (79 aa)).

This sequence belongs to the RRM RBM42 family. As to quaternary structure, interacts with HNRNPK.

It is found in the nucleus. The protein localises to the cytoplasm. Functionally, binds (via the RRM domain) to the 3' untranslated region (UTR) of p21 mRNA. The chain is RNA-binding protein 42 (Rbm42) from Rattus norvegicus (Rat).